The primary structure comprises 318 residues: DNA primase small subunit PriS (318 aa).

Active-site residues include Asp-95, Asp-97, and Asp-224.

The protein belongs to the eukaryotic-type primase small subunit family. Heterodimer of a small subunit (PriS) and a large subunit (PriL). The cofactor is Mg(2+). Mn(2+) is required as a cofactor.

Catalytic subunit of DNA primase, an RNA polymerase that catalyzes the synthesis of short RNA molecules used as primers for DNA polymerase during DNA replication. The small subunit contains the primase catalytic core and has DNA synthesis activity on its own. Binding to the large subunit stabilizes and modulates the activity, increasing the rate of DNA synthesis while decreasing the length of the DNA fragments, and conferring RNA synthesis capability. The DNA polymerase activity may enable DNA primase to also catalyze primer extension after primer synthesis. May also play a role in DNA repair. This Sulfurisphaera tokodaii (strain DSM 16993 / JCM 10545 / NBRC 100140 / 7) (Sulfolobus tokodaii) protein is DNA primase small subunit PriS.